The sequence spans 427 residues: Gamma-glutamyl phosphate reductase (427 aa).

It belongs to the gamma-glutamyl phosphate reductase family.

Its subcellular location is the cytoplasm. The enzyme catalyses L-glutamate 5-semialdehyde + phosphate + NADP(+) = L-glutamyl 5-phosphate + NADPH + H(+). The protein operates within amino-acid biosynthesis; L-proline biosynthesis; L-glutamate 5-semialdehyde from L-glutamate: step 2/2. Catalyzes the NADPH-dependent reduction of L-glutamate 5-phosphate into L-glutamate 5-semialdehyde and phosphate. The product spontaneously undergoes cyclization to form 1-pyrroline-5-carboxylate. This is Gamma-glutamyl phosphate reductase from Bifidobacterium adolescentis (strain ATCC 15703 / DSM 20083 / NCTC 11814 / E194a).